Reading from the N-terminus, the 419-residue chain is Tyrosine--tRNA ligase (419 aa).

Y34 contacts L-tyrosine. The 'HIGH' region motif lies at 39–48 (PTADSLHLGN). L-tyrosine-binding residues include Y169 and Q173. The 'KMSKS' region motif lies at 229 to 233 (KFGKS). Residue K232 coordinates ATP. An S4 RNA-binding domain is found at 353–419 (LTLVELLISA…GKKKNFVLTY (67 aa)).

It belongs to the class-I aminoacyl-tRNA synthetase family. TyrS type 1 subfamily. In terms of assembly, homodimer.

It is found in the cytoplasm. It catalyses the reaction tRNA(Tyr) + L-tyrosine + ATP = L-tyrosyl-tRNA(Tyr) + AMP + diphosphate + H(+). In terms of biological role, catalyzes the attachment of tyrosine to tRNA(Tyr) in a two-step reaction: tyrosine is first activated by ATP to form Tyr-AMP and then transferred to the acceptor end of tRNA(Tyr). The polypeptide is Tyrosine--tRNA ligase (Lactococcus lactis subsp. lactis (strain IL1403) (Streptococcus lactis)).